We begin with the raw amino-acid sequence, 139 residues long: Gas vesicle protein A (139 aa).

The interval 113–139 (EKLGDMLTSDEPEPRKATRVRSRRADR) is disordered. The segment covering 129–139 (ATRVRSRRADR) has biased composition (basic residues).

Belongs to the gas vesicle GvpA family. In terms of assembly, the gas vesicle shell is 2 nm thick and consists of a single layer of this protein. It forms helical ribs nearly perpendicular to the long axis of the vesicle.

It is found in the gas vesicle shell. Gas vesicles are hollow, gas filled proteinaceous nanostructures found in some microorganisms. During planktonic growth they allow positioning of the organism at a favorable depth for light or nutrient acquisition. GvpA forms the protein shell. The protein is Gas vesicle protein A of Mycobacterium sp. (strain JLS).